Here is a 246-residue protein sequence, read N- to C-terminus: MPAKLSVNLNAIAMLRNRRDLPWPSVTGIGRLALAAGAHGLTVHPRPDERHTRHSDLPEIRALIDDEFPQAEFNIEGYPSEDFLALVEKHQPEQVTLVPDDPAQATSDHGWNFVADAALLTPIVRRLKKGGFRVSLFSDADPAGMTAARDTGADRIELYTGPYGSYHSDSAKADKELERLGKTADAAFAAGLQVNAGHDLTVGNLPALAKRIPALAEVSIGHGLTADALEYGMAGTVGRFLRACGW.

3-amino-2-oxopropyl phosphate is bound by residues Asn-8 and Arg-19. The Proton acceptor role is filled by His-44. 1-deoxy-D-xylulose 5-phosphate contacts are provided by Arg-46 and His-51. The active-site Proton acceptor is the Glu-76. Thr-106 contacts 1-deoxy-D-xylulose 5-phosphate. His-198 acts as the Proton donor in catalysis. 3-amino-2-oxopropyl phosphate is bound by residues Asp-199 and 221–222; that span reads GH.

The protein belongs to the PNP synthase family. As to quaternary structure, homooctamer; tetramer of dimers.

It is found in the cytoplasm. The enzyme catalyses 3-amino-2-oxopropyl phosphate + 1-deoxy-D-xylulose 5-phosphate = pyridoxine 5'-phosphate + phosphate + 2 H2O + H(+). Its pathway is cofactor biosynthesis; pyridoxine 5'-phosphate biosynthesis; pyridoxine 5'-phosphate from D-erythrose 4-phosphate: step 5/5. Catalyzes the complicated ring closure reaction between the two acyclic compounds 1-deoxy-D-xylulose-5-phosphate (DXP) and 3-amino-2-oxopropyl phosphate (1-amino-acetone-3-phosphate or AAP) to form pyridoxine 5'-phosphate (PNP) and inorganic phosphate. The sequence is that of Pyridoxine 5'-phosphate synthase from Mesorhizobium japonicum (strain LMG 29417 / CECT 9101 / MAFF 303099) (Mesorhizobium loti (strain MAFF 303099)).